Reading from the N-terminus, the 108-residue chain is MGFEQGDAKKGANLFKTRCAQCHTLKAGEGNKIGPELHGLFGRKTGSVAGYSYTDANKQKGIEWNHDTLFEYLENPKKYIPGTKMAFGGLKKPKDRNDLITFLEQETK.

Heme c is bound by residues Cys19, Cys22, His23, and Met85.

Belongs to the cytochrome c family. In terms of processing, binds 1 heme c group covalently per subunit.

The protein resides in the mitochondrion intermembrane space. Its function is as follows. Electron carrier protein. The oxidized form of the cytochrome c heme group can accept an electron from the heme group of the cytochrome c1 subunit of cytochrome reductase. Cytochrome c then transfers this electron to the cytochrome oxidase complex, the final protein carrier in the mitochondrial electron-transport chain. The polypeptide is Cytochrome c (Cochliobolus lunatus (Filamentous fungus)).